The following is a 298-amino-acid chain: Tryptophan 2,3-dioxygenase (298 aa).

Substrate is bound by residues 51-55 (FIIQH), Tyr113, and Arg117. A heme-binding site is contributed by His240. Thr254 lines the substrate pocket.

Belongs to the tryptophan 2,3-dioxygenase family. Homotetramer. The cofactor is heme.

It carries out the reaction L-tryptophan + O2 = N-formyl-L-kynurenine. The protein operates within amino-acid degradation; L-tryptophan degradation via kynurenine pathway; L-kynurenine from L-tryptophan: step 1/2. Functionally, heme-dependent dioxygenase that catalyzes the oxidative cleavage of the L-tryptophan (L-Trp) pyrrole ring and converts L-tryptophan to N-formyl-L-kynurenine. Catalyzes the oxidative cleavage of the indole moiety. The polypeptide is Tryptophan 2,3-dioxygenase (Xanthomonas campestris pv. campestris (strain 8004)).